The following is an 863-amino-acid chain: Glycogen phosphorylase (863 aa).

Position 618 is an N6-(pyridoxal phosphate)lysine (lysine 618).

Belongs to the glycogen phosphorylase family. Requires pyridoxal 5'-phosphate as cofactor.

It carries out the reaction [(1-&gt;4)-alpha-D-glucosyl](n) + phosphate = [(1-&gt;4)-alpha-D-glucosyl](n-1) + alpha-D-glucose 1-phosphate. In terms of biological role, phosphorylase is an important allosteric enzyme in carbohydrate metabolism. Enzymes from different sources differ in their regulatory mechanisms and in their natural substrates. However, all known phosphorylases share catalytic and structural properties. This is Glycogen phosphorylase (glgP) from Mycobacterium bovis (strain ATCC BAA-935 / AF2122/97).